Here is a 558-residue protein sequence, read N- to C-terminus: Dihydroxy-acid dehydratase (558 aa).

Cys48 contacts [2Fe-2S] cluster. Asp80 is a binding site for Mg(2+). Cys121 contributes to the [2Fe-2S] cluster binding site. 2 residues coordinate Mg(2+): Asp122 and Lys123. N6-carboxylysine is present on Lys123. Position 193 (Cys193) interacts with [2Fe-2S] cluster. Glu445 serves as a coordination point for Mg(2+). The Proton acceptor role is filled by Ser471.

Belongs to the IlvD/Edd family. Homodimer. The cofactor is [2Fe-2S] cluster. Mg(2+) serves as cofactor.

It catalyses the reaction (2R)-2,3-dihydroxy-3-methylbutanoate = 3-methyl-2-oxobutanoate + H2O. The enzyme catalyses (2R,3R)-2,3-dihydroxy-3-methylpentanoate = (S)-3-methyl-2-oxopentanoate + H2O. The protein operates within amino-acid biosynthesis; L-isoleucine biosynthesis; L-isoleucine from 2-oxobutanoate: step 3/4. Its pathway is amino-acid biosynthesis; L-valine biosynthesis; L-valine from pyruvate: step 3/4. Functionally, functions in the biosynthesis of branched-chain amino acids. Catalyzes the dehydration of (2R,3R)-2,3-dihydroxy-3-methylpentanoate (2,3-dihydroxy-3-methylvalerate) into 2-oxo-3-methylpentanoate (2-oxo-3-methylvalerate) and of (2R)-2,3-dihydroxy-3-methylbutanoate (2,3-dihydroxyisovalerate) into 2-oxo-3-methylbutanoate (2-oxoisovalerate), the penultimate precursor to L-isoleucine and L-valine, respectively. This chain is Dihydroxy-acid dehydratase, found in Prochlorococcus marinus (strain SARG / CCMP1375 / SS120).